Reading from the N-terminus, the 629-residue chain is Phosphomethylpyrimidine synthase (629 aa).

Substrate contacts are provided by residues N215, M244, Y273, H309, 329-331 (SRG), 370-373 (DGLR), and E409. Residue H413 coordinates Zn(2+). Y436 lines the substrate pocket. Position 477 (H477) interacts with Zn(2+). 3 residues coordinate [4Fe-4S] cluster: C557, C560, and C565. A disordered region spans residues 589 to 610 (ENIKRETSAEEAEEAREGMSDM).

The protein belongs to the ThiC family. As to quaternary structure, homodimer. The cofactor is [4Fe-4S] cluster.

It catalyses the reaction 5-amino-1-(5-phospho-beta-D-ribosyl)imidazole + S-adenosyl-L-methionine = 4-amino-2-methyl-5-(phosphooxymethyl)pyrimidine + CO + 5'-deoxyadenosine + formate + L-methionine + 3 H(+). The protein operates within cofactor biosynthesis; thiamine diphosphate biosynthesis. In terms of biological role, catalyzes the synthesis of the hydroxymethylpyrimidine phosphate (HMP-P) moiety of thiamine from aminoimidazole ribotide (AIR) in a radical S-adenosyl-L-methionine (SAM)-dependent reaction. This is Phosphomethylpyrimidine synthase from Erythrobacter litoralis (strain HTCC2594).